A 267-amino-acid polypeptide reads, in one-letter code: UPF0246 protein Dshi_3333 (267 aa).

The protein belongs to the UPF0246 family.

The protein is UPF0246 protein Dshi_3333 of Dinoroseobacter shibae (strain DSM 16493 / NCIMB 14021 / DFL 12).